We begin with the raw amino-acid sequence, 367 residues long: Avirulence protein ATR5 (367 aa).

The N-terminal stretch at Met-1–Ala-16 is a signal peptide. Asn-20 is a glycosylation site (N-linked (GlcNAc...) asparagine). Positions Asn-33–Thr-65 are disordered. A compositionally biased stretch (basic and acidic residues) spans Arg-54–Thr-65. Residues Thr-61 to Arg-64 carry the dEER motif.

Belongs to the RxLR effector family.

It is found in the secreted. Its subcellular location is the host cell. Secreted effector that acts as an elicitor of hypersensitive response (HR) specifically on plants carrying defense protein RPP5. This Hyaloperonospora arabidopsidis (strain Emoy2) (Downy mildew agent) protein is Avirulence protein ATR5.